Reading from the N-terminus, the 477-residue chain is UDP-N-acetylmuramate--L-alanine ligase (477 aa).

Glycine 117–threonine 123 is a binding site for ATP.

Belongs to the MurCDEF family.

It localises to the cytoplasm. The catalysed reaction is UDP-N-acetyl-alpha-D-muramate + L-alanine + ATP = UDP-N-acetyl-alpha-D-muramoyl-L-alanine + ADP + phosphate + H(+). It functions in the pathway cell wall biogenesis; peptidoglycan biosynthesis. Its function is as follows. Cell wall formation. This chain is UDP-N-acetylmuramate--L-alanine ligase, found in Phenylobacterium zucineum (strain HLK1).